Reading from the N-terminus, the 372-residue chain is Aminodeoxyfutalosine synthase (372 aa).

One can recognise a Radical SAM core domain in the interval 53-292 (HKTYFVHSIR…VARLYLDNFP (240 aa)). The [4Fe-4S] cluster site is built by cysteine 69, cysteine 73, and cysteine 76.

Belongs to the radical SAM superfamily. MqnE family. [4Fe-4S] cluster is required as a cofactor.

The catalysed reaction is 3-[(1-carboxyvinyl)-oxy]benzoate + S-adenosyl-L-methionine + H2O = 6-amino-6-deoxyfutalosine + hydrogencarbonate + L-methionine + H(+). Its pathway is quinol/quinone metabolism; menaquinone biosynthesis. Functionally, radical SAM enzyme that catalyzes the addition of the adenosyl radical to the double bond of 3-[(1-carboxyvinyl)oxy]benzoate, leading to aminodeoxyfutalosine (AFL), a key intermediate in the formation of menaquinone (MK, vitamin K2) from chorismate. The polypeptide is Aminodeoxyfutalosine synthase (Thermus thermophilus (strain ATCC 27634 / DSM 579 / HB8)).